Here is a 514-residue protein sequence, read N- to C-terminus: WD repeat-containing protein 26 (514 aa).

In terms of domain architecture, CTLH spans 9 to 84 (EHPSATKFRN…EYLEDGKVLE (76 aa)). WD repeat units follow at residues 206–245 (EHCNEVWFCKFSNDGTKLATGSKDTTVIVWQVDADTHLLK), 252–291 (GHAYGVSYIAWSPDDSYLVACGPDDCSELWLWNVQTGELR), 297–337 (SHED…DSWE), 377–416 (QEDHPIMSFTISKNGRLALLNVATQGVHLWDLQDRVLVRK), 419–461 (GVTQ…PIAE), and 464–504 (GHTR…DHQN).

Forms homooligomers. Identified in the CTLH complex that contains GID4, RANBP9 and/or RANBP10, MKLN1, MAEA, RMND5A (or alternatively its paralog RMND5B), GID8, ARMC8, WDR26 and YPEL5. Within this complex, MAEA, RMND5A (or alternatively its paralog RMND5B), GID8, WDR26, and RANBP9 and/or RANBP10 form the catalytic core, while GID4, MKLN1, ARMC8 and YPEL5 have ancillary roles. Interacts with DDB1-CUL4A/B E3 ligase complexes. Forms a complex composed of at least WDR26, a G-beta:gamma unit, and PLCB2. Interacts with AXIN1.

The protein localises to the cytoplasm. It is found in the nucleus. The protein resides in the mitochondrion. In terms of biological role, G-beta-like protein involved in cell signal transduction. Acts as a negative regulator in MAPK signaling pathway. Functions as a scaffolding protein to promote G beta:gamma-mediated PLCB2 plasma membrane translocation and subsequent activation in leukocytes. Core component of the CTLH E3 ubiquitin-protein ligase complex that selectively accepts ubiquitin from UBE2H and mediates ubiquitination and subsequent proteasomal degradation of the transcription factor HBP1. Acts as a negative regulator of the canonical Wnt signaling pathway through preventing ubiquitination of beta-catenin CTNNB1 by the beta-catenin destruction complex, thus negatively regulating CTNNB1 degradation. Protects cells from oxidative stress-induced apoptosis via the down-regulation of AP-1 transcriptional activity as well as by inhibiting cytochrome c release from mitochondria. Also protects cells by promoting hypoxia-mediated autophagy and mitophagy. This chain is WD repeat-containing protein 26 (Wdr26), found in Rattus norvegicus (Rat).